Consider the following 326-residue polypeptide: Probable magnesium transporter NIPA7 (326 aa).

The Extracellular portion of the chain corresponds to 1–4 (MVSD). Residues 5-25 (NEMGLVLAVSSSVFIGSSFIL) traverse the membrane as a helical segment. At 26 to 51 (KKKGLKRAAANGTRAGFGGYTYLLEP) the chain is on the cytoplasmic side. A helical membrane pass occupies residues 52–72 (LWWVGLVTMTFGEIANFVAYV). The Extracellular segment spans residues 73–76 (YAPA). Residues 77–97 (VLVTPLGALSIIISAVLAHFL) form a helical membrane-spanning segment. At 98-104 (LDEKLRK) the chain is on the cytoplasmic side. The helical transmembrane segment at 105–125 (MGVWGCVCCIVGSVMIVIHAP) threads the bilayer. At 126–142 (QEQTPNSVEEIWKLAMQ) the chain is on the extracellular side. The chain crosses the membrane as a helical span at residues 143–163 (PAFLIYVAISMSIVLALILYC). At 164–169 (EPLCGQ) the chain is on the cytoplasmic side. Residues 170–190 (TNILVYIGICSLMGSLTVMSI) form a helical membrane-spanning segment. Residues 191-209 (KAVGIAIKLTFEGINQIWY) lie on the Extracellular side of the membrane. Residues 210-230 (PETWFFAMVAAICVVMQMIYL) traverse the membrane as a helical segment. The Cytoplasmic portion of the chain corresponds to 231 to 240 (NKALDTFNAA). The chain crosses the membrane as a helical span at residues 241–261 (IVSPIYYVMFTTLTIVASAIM). Topologically, residues 262–272 (FKDWNGQNTDS) are extracellular. A helical transmembrane segment spans residues 273-293 (IASEICGFITVLTGTVILHST). Residues 294–326 (REEEQASPRRMRWQDSGKSFDEEHLTSLYSPEY) are Cytoplasmic-facing.

It belongs to the NIPA (TC 2.A.7) family. As to quaternary structure, homodimer.

It localises to the cell membrane. It is found in the early endosome. Its function is as follows. Acts as a Mg(2+) transporter. Can also transport other divalent cations such as Fe(2+), Sr(2+), Ba(2+), Mn(2+) and Co(2+) but to a much less extent than Mg(2+). In Arabidopsis thaliana (Mouse-ear cress), this protein is Probable magnesium transporter NIPA7.